Reading from the N-terminus, the 93-residue chain is Defensin 5 (93 aa).

A signal peptide spans 1 to 19 (MKKLVLLSALVLLALQVEA). Residues 20–58 (EPTPKTDEGTKTDEQPGKEDQVVSVSIEGQGDPAFQDAV) constitute a propeptide that is removed on maturation. 3 disulfides stabilise this stretch: cysteine 64–cysteine 92, cysteine 66–cysteine 81, and cysteine 71–cysteine 91.

Belongs to the alpha-defensin family. In terms of tissue distribution, small intestine. Not present in heart, liver, spleen, kidney, large intestine and colon.

The protein resides in the secreted. Its function is as follows. Probably contributes to the antimicrobial barrier function of the small intestine. This is Defensin 5 from Rattus norvegicus (Rat).